The sequence spans 360 residues: 45 kDa calcium-binding protein (360 aa).

Residues M1–A29 form the signal peptide. A glycan (N-linked (GlcNAc...) asparagine) is linked at N33. 5 EF-hand domains span residues R96–E131, E135–F170, M231–N266, W276–Y311, and N312–S347. Ca(2+)-binding residues include D109, N111, D113, Q115, E120, D148, D150, D152, H154, E159, D244, D246, D248, K250, E255, D289, N291, D293, E300, D325, N327, D329, H331, and E336.

The protein belongs to the CREC family.

It localises to the golgi apparatus lumen. Its function is as follows. May regulate calcium-dependent activities in the endoplasmic reticulum lumen or post-ER compartment. This Xenopus tropicalis (Western clawed frog) protein is 45 kDa calcium-binding protein (sdf4).